Consider the following 95-residue polypeptide: Protein TusB (95 aa).

The protein belongs to the DsrH/TusB family. As to quaternary structure, heterohexamer, formed by a dimer of trimers. The hexameric TusBCD complex contains 2 copies each of TusB, TusC and TusD. The TusBCD complex interacts with TusE.

It is found in the cytoplasm. Its function is as follows. Part of a sulfur-relay system required for 2-thiolation of 5-methylaminomethyl-2-thiouridine (mnm(5)s(2)U) at tRNA wobble positions. The chain is Protein TusB from Buchnera aphidicola subsp. Acyrthosiphon pisum (strain 5A).